We begin with the raw amino-acid sequence, 248 residues long: Pulmonary surfactant-associated protein A (248 aa).

Residues 1–17 (MLLCSLTLMLLWMVASG) form the signal peptide. Positions 28–100 (GSPGIPGTPG…PGERGPPGFP (73 aa)) constitute a Collagen-like domain. The segment at 29–103 (SPGIPGTPGS…RGPPGFPAYL (75 aa)) is disordered. Residues 42 to 51 (PGRDGRDGIK) show a composition bias toward basic and acidic residues. The segment covering 54–65 (PGPPGPMGPPGG) has biased composition (pro residues). Residues 69-82 (LPGRDGMTGAPGLP) are compositionally biased toward low complexity. Over residues 84-93 (ERGEKGEPGE) the composition is skewed to basic and acidic residues. The region spanning 127 to 247 (LQGSMLEVGE…CLQYRLAICE (121 aa)) is the C-type lectin domain. Disulfide bonds link cysteine 155/cysteine 246 and cysteine 224/cysteine 238. The N-linked (GlcNAc...) asparagine glycan is linked to asparagine 207. Ca(2+) is bound by residues glutamate 215, arginine 217, asparagine 234, and aspartate 235.

It belongs to the SFTPA family. As to quaternary structure, oligomeric complex of 6 set of homotrimers.

The protein localises to the secreted. The protein resides in the extracellular space. It localises to the extracellular matrix. Its subcellular location is the surface film. Functionally, in presence of calcium ions, it binds to surfactant phospholipids and contributes to lower the surface tension at the air-liquid interface in the alveoli of the mammalian lung and is essential for normal respiration. Enhances the expression of MYO18A/SP-R210 on alveolar macrophages. The chain is Pulmonary surfactant-associated protein A (SFTPA1) from Ovis aries (Sheep).